The following is a 628-amino-acid chain: Junctophilin-4 (628 aa).

Residues 1–606 (MSPGGKFDFD…RPAQPGAANP (606 aa)) lie on the Cytoplasmic side of the membrane. MORN repeat units follow at residues 50–72 (LGVF…KREG), 74–95 (GVER…KGRS), 96–117 (GVWE…FQDG), 118–140 (YGTE…KRHG), 141–163 (YGVR…RTSL), and 164–186 (DSGH…EGGS). 2 disordered regions span residues 158-214 (PRRT…RTPA) and 231-276 (GGRR…LIEG). Over residues 170–179 (PPTPPPPLPL) the composition is skewed to pro residues. Low complexity-rich tracts occupy residues 231-241 (GGRRSSLGSKR) and 253-272 (GSTG…APPA). MORN repeat units lie at residues 317-339 (YGRT…RLVH) and 340-362 (GGRV…KVDR). Positions 415–602 (DLQPMLEAPG…AATERPAQPG (188 aa)) are disordered. The segment covering 432-443 (EGSDTEPLDEDS) has biased composition (acidic residues). Low complexity-rich tracts occupy residues 453–467 (PSEG…PASS) and 528–541 (GSPL…SSGS). Residues 607–628 (LVVGAVALLDLSLAFLFSQLLT) form a helical; Anchor for type IV membrane protein membrane-spanning segment.

Belongs to the junctophilin family.

Its subcellular location is the cell membrane. It localises to the endoplasmic reticulum membrane. Its function is as follows. Junctophilins contribute to the formation of junctional membrane complexes (JMCs) which link the plasma membrane with the endoplasmic or sarcoplasmic reticulum in excitable cells. Provides a structural foundation for functional cross-talk between the cell surface and intracellular calcium release channels. JPH4 is brain-specific and appears to have an active role in certain neurons involved in motor coordination and memory. The sequence is that of Junctophilin-4 (JPH4) from Homo sapiens (Human).